The chain runs to 610 residues: Myosin light chain kinase 2, skeletal/cardiac muscle (610 aa).

Disordered regions lie at residues 1-168 (MATE…HSPS) and 196-240 (VSET…DTSQ). The residue at position 2 (alanine 2) is an N-acetylalanine. 2 stretches are compositionally biased toward basic and acidic residues: residues 32 to 63 (SEKE…KKNP) and 70 to 82 (KTPE…KKGD). A compositionally biased stretch (gly residues) spans 94–109 (SGEGDGGGGPAEGGTG). The span at 141–157 (GEAKAGKKAAECREAGR) shows a compositional bias: basic and acidic residues. 3 positions are modified to phosphoserine: serine 160, serine 166, and serine 168. Residues 299 to 554 (MNSKEALGGG…AEQCLAHPWL (256 aa)) enclose the Protein kinase domain. ATP contacts are provided by residues 305–313 (LGGGKFGAV) and lysine 328. Aspartate 420 serves as the catalytic Proton acceptor. At threonine 459 the chain carries Phosphothreonine. The segment at 588 to 600 (IAVSAANRFKKIS) is calmodulin-binding.

The protein belongs to the protein kinase superfamily. CAMK Ser/Thr protein kinase family. In terms of assembly, may interact with centrin.

It localises to the cytoplasm. It catalyses the reaction L-seryl-[myosin light chain] + ATP = O-phospho-L-seryl-[myosin light chain] + ADP + H(+). It carries out the reaction L-threonyl-[myosin light chain] + ATP = O-phospho-L-threonyl-[myosin light chain] + ADP + H(+). In terms of biological role, implicated in the level of global muscle contraction and cardiac function. Phosphorylates a specific serine in the N-terminus of a myosin light chain. The sequence is that of Myosin light chain kinase 2, skeletal/cardiac muscle (Mylk2) from Rattus norvegicus (Rat).